A 266-amino-acid chain; its full sequence is Large ribosomal subunit protein uL4 (266 aa).

This sequence belongs to the universal ribosomal protein uL4 family. In terms of assembly, part of the 50S ribosomal subunit.

In terms of biological role, one of the primary rRNA binding proteins, this protein initially binds near the 5'-end of the 23S rRNA. It is important during the early stages of 50S assembly. It makes multiple contacts with different domains of the 23S rRNA in the assembled 50S subunit and ribosome. Forms part of the polypeptide exit tunnel. In Sulfolobus acidocaldarius (strain ATCC 33909 / DSM 639 / JCM 8929 / NBRC 15157 / NCIMB 11770), this protein is Large ribosomal subunit protein uL4.